We begin with the raw amino-acid sequence, 249 residues long: Expansin-A19 (249 aa).

A signal peptide spans M1–S21. Residues G41 to G154 form the Expansin-like EG45 domain. N-linked (GlcNAc...) asparagine glycosylation is found at N116 and N216. One can recognise an Expansin-like CBD domain in the interval Y164–T243.

The protein belongs to the expansin family. Expansin A subfamily.

The protein localises to the secreted. Its subcellular location is the cell wall. It is found in the membrane. Its function is as follows. May cause loosening and extension of plant cell walls by disrupting non-covalent bonding between cellulose microfibrils and matrix glucans. No enzymatic activity has been found. May be required for rapid internodal elongation in deepwater rice during submergence. This is Expansin-A19 (EXPA19) from Oryza sativa subsp. japonica (Rice).